The following is a 189-amino-acid chain: Protein GrpE (189 aa).

The interval 1–37 (MSDSSKEKKKKFADMVSRQKGDDQQSDNHKQTDDLNE) is disordered. Residues 17–33 (SRQKGDDQQSDNHKQTD) are compositionally biased toward basic and acidic residues.

Belongs to the GrpE family. Homodimer.

It localises to the cytoplasm. Its function is as follows. Participates actively in the response to hyperosmotic and heat shock by preventing the aggregation of stress-denatured proteins, in association with DnaK and GrpE. It is the nucleotide exchange factor for DnaK and may function as a thermosensor. Unfolded proteins bind initially to DnaJ; upon interaction with the DnaJ-bound protein, DnaK hydrolyzes its bound ATP, resulting in the formation of a stable complex. GrpE releases ADP from DnaK; ATP binding to DnaK triggers the release of the substrate protein, thus completing the reaction cycle. Several rounds of ATP-dependent interactions between DnaJ, DnaK and GrpE are required for fully efficient folding. The sequence is that of Protein GrpE from Wolbachia sp. subsp. Drosophila simulans (strain wRi).